The chain runs to 156 residues: Small ribosomal subunit protein uS7 (156 aa).

The protein belongs to the universal ribosomal protein uS7 family. As to quaternary structure, part of the 30S ribosomal subunit. Contacts proteins S9 and S11.

Functionally, one of the primary rRNA binding proteins, it binds directly to 16S rRNA where it nucleates assembly of the head domain of the 30S subunit. Is located at the subunit interface close to the decoding center, probably blocks exit of the E-site tRNA. The polypeptide is Small ribosomal subunit protein uS7 (Lawsonia intracellularis (strain PHE/MN1-00)).